Consider the following 518-residue polypeptide: Reduced folate transporter (518 aa).

M1 is modified (N-acetylmethionine). At 1–29 (MVPTGQVAEKQACEEPRQDRELKSWRCLV) the chain is on the cytoplasmic side. Residues 30–50 (FYLCFFGFMAQLRPGESFITP) form a helical membrane-spanning segment. The folate site is built by I48 and T49. Over 51–62 (YLLQQNFTIEQV) the chain is Extracellular. N56 carries N-linked (GlcNAc...) asparagine glycosylation. A helical membrane pass occupies residues 63 to 85 (TNEIIPVLPYSHLAVLVPIFLLT). Residues 86–89 (DYLR) lie on the Cytoplasmic side of the membrane. A helical transmembrane segment spans residues 90-110 (YKPILILQCLSFMCVWLLLLL). Residues 111-114 (GTSV) are Extracellular-facing. Residues 115–137 (VHMQLMEVFYSVTMAARIAYSSY) form a helical membrane-spanning segment. Folate is bound by residues E121 and R131. Residues 138–151 (IFSLVRPSRYQRMA) are Cytoplasmic-facing. A helical transmembrane segment spans residues 152 to 176 (SYSRAAVLLGVFTSSVLGQVLWPLE). V162 provides a ligand contact to folate. Topologically, residues 177 to 181 (QKSQN) are extracellular. The helical transmembrane segment at 182–200 (SNMLNYISLGFIIFSLGLS) threads the bilayer. At 201–266 (LFLKRPKHSL…LSELVGNLRQ (66 aa)) the chain is on the cytoplasmic side. A helical membrane pass occupies residues 267–292 (PQLRLWCLWWVFNSAGYYLIVYYVHV). A281, G282, and I286 together coordinate folate. Topologically, residues 293 to 300 (LWSIDKNL) are extracellular. A helical membrane pass occupies residues 301–323 (NYNGAVDAASTLLSAITSFSAGF). Residues 324–329 (VKIRWA) are Cytoplasmic-facing. Residues 330–350 (LWSKLVIASVIAIQAGLVFCM) traverse the membrane as a helical segment. Topologically, residues 351 to 353 (YMV) are extracellular. Residues 354–377 (HYVTWVHKIWVLYMTYVLFRGAYQ) traverse the membrane as a helical segment. Folate contacts are provided by Y366 and V370. At 378–391 (FLVPIATFQIASSL) the chain is on the cytoplasmic side. The chain crosses the membrane as a helical span at residues 392–415 (SKELCALVFGINTFLATALKTAIT). A required for substrate-binding region spans residues 407-419 (ATALKTAITLVVS). The Extracellular segment spans residues 416 to 423 (LVVSDKRG). A helical membrane pass occupies residues 424-448 (LGLKVEKQFCIYSVYFMVLSVICFV). The Cytoplasmic portion of the chain corresponds to 449 to 512 (GAVLDGVRYC…DGVEDSEASL (64 aa)). 3 positions are modified to phosphoserine: S473, S478, and S483. The segment at 480 to 518 (QVPSMQDGGLGGLQPSAPQLLPEDGVEDSEASLRAEAKA) is disordered.

This sequence belongs to the reduced folate carrier (RFC) transporter (TC 2.A.48) family.

The protein localises to the cell membrane. It localises to the apical cell membrane. The protein resides in the basolateral cell membrane. It carries out the reaction 5-amino-1-(5-phospho-beta-D-ribosyl)imidazole-4-carboxamide(in) + (6S)-5-methyl-5,6,7,8-tetrahydrofolate(out) = 5-amino-1-(5-phospho-beta-D-ribosyl)imidazole-4-carboxamide(out) + (6S)-5-methyl-5,6,7,8-tetrahydrofolate(in). In terms of biological role, antiporter that mediates the import of reduced folates, driven by the export of organic anions. Also acts as an importer of immunoreactive cyclic dinucleotides, but with a lower transporter activity. Mechanistically, acts as a secondary active transporter, which exports intracellular organic anions down their concentration gradients to facilitate the uptake of its substrates. Has high affinity for N5-methyltetrahydrofolate, the predominant circulating form of folate. Also mediates the import of antifolate drug methotrexate. 5-amino-4-imidazolecarboxamide riboside (AICAR), when phosphorylated to AICAR monophosphate, can serve as an organic anion for antiporter activity. In Cricetulus griseus (Chinese hamster), this protein is Reduced folate transporter.